A 197-amino-acid polypeptide reads, in one-letter code: Imidazoleglycerol-phosphate dehydratase (197 aa).

Belongs to the imidazoleglycerol-phosphate dehydratase family.

The protein localises to the cytoplasm. It carries out the reaction D-erythro-1-(imidazol-4-yl)glycerol 3-phosphate = 3-(imidazol-4-yl)-2-oxopropyl phosphate + H2O. It functions in the pathway amino-acid biosynthesis; L-histidine biosynthesis; L-histidine from 5-phospho-alpha-D-ribose 1-diphosphate: step 6/9. In Pseudomonas aeruginosa (strain LESB58), this protein is Imidazoleglycerol-phosphate dehydratase.